Reading from the N-terminus, the 582-residue chain is Phosphoglucomutase, cytoplasmic (582 aa).

2 residues coordinate alpha-D-glucose 1,6-bisphosphate: R25 and S124. S124 serves as the catalytic Phosphoserine intermediate. Positions 124, 300, 302, and 304 each coordinate Mg(2+). S124 bears the Phosphoserine mark. Residues D304, R305, T368, E387, S389, and K400 each coordinate alpha-D-glucose 1,6-bisphosphate.

This sequence belongs to the phosphohexose mutase family. Monomer. It depends on Mg(2+) as a cofactor.

The protein localises to the cytoplasm. It catalyses the reaction alpha-D-glucose 1-phosphate = alpha-D-glucose 6-phosphate. The enzyme catalyses O-phospho-L-seryl-[protein] + alpha-D-glucose 1-phosphate = alpha-D-glucose 1,6-bisphosphate + L-seryl-[protein]. The catalysed reaction is alpha-D-glucose 1,6-bisphosphate + L-seryl-[protein] = O-phospho-L-seryl-[protein] + alpha-D-glucose 6-phosphate. Catalyzes the reversible isomerization of alpha-D-glucose 1-phosphate to alpha-D-glucose 6-phosphate. The mechanism proceeds via the intermediate compound alpha-D-glucose 1,6-bisphosphate. This enzyme participates in both the breakdown and synthesis of glucose. The chain is Phosphoglucomutase, cytoplasmic (PGM1) from Pisum sativum (Garden pea).